A 303-amino-acid chain; its full sequence is GTPase Era (303 aa).

Residues 7 to 174 form the Era-type G domain; it reads KSGFVAILGR…IDTLSEKLDE (168 aa). A G1 region spans residues 15 to 22; that stretch reads GRPNVGKS. Position 15–22 (15–22) interacts with GTP; sequence GRPNVGKS. The interval 41 to 45 is G2; sequence QTTRN. Positions 62–65 are G3; sequence DTPG. Residues 62 to 66 and 124 to 127 contribute to the GTP site; these read DTPGI and NKID. Residues 124 to 127 are G4; it reads NKID. A G5 region spans residues 153–155; sequence ISA. One can recognise a KH type-2 domain in the interval 205-283; sequence TREEVPHSIA…YLETWVKIKN (79 aa).

Belongs to the TRAFAC class TrmE-Era-EngA-EngB-Septin-like GTPase superfamily. Era GTPase family. In terms of assembly, monomer.

The protein resides in the cytoplasm. It is found in the cell membrane. Functionally, an essential GTPase that binds both GDP and GTP, with rapid nucleotide exchange. Plays a role in 16S rRNA processing and 30S ribosomal subunit biogenesis and possibly also in cell cycle regulation and energy metabolism. The polypeptide is GTPase Era (Lactococcus lactis subsp. lactis (strain IL1403) (Streptococcus lactis)).